The following is a 551-amino-acid chain: MKTDIEIAREAKLKRISDIAKDIGIEEKYLEPYGKYIAKVDLKFLKTLNNKKDGKLILVTAITPTPAGEGKTTTSIGLSMALNRLGKKSIVTLREPSLGPVFGIKGGAAGGGYSQVLPMENINLHFTGDIHAISSAHNLISAVIDSHIKFGNNLNINPTKVFWKRTMDMNDRALRQIIVGLGGNANGLPREDGFIITAASEIMAILCLAKDLKDLKERLGNIVVAESFDKKLVRVKDLKIEGALTALLKDAINPNIVQTIENTPAFIHGGPFANIAHGTNSIIATKLALKLTDYVVTEAGFAADLGAEKFLDFVTQVGNFDVNAVVLVATIKALKYHGGIKKDELNKENVDAMLKGMENLKTHIENLKLYNVPVVVALNVFASDTTNELKAFSEHCNAPHALVRAFEKGSKGTIELANTVLENISDSKHIPILNPEMSIEEKIETLATKVYRARKVIYTDTAKSKLKFLKRHGFETLPVIVAKTQSSISDDPKKLNAPRDYNFTIRDFELSAGAGFVVALAGEIMRMPGLSKIPNAVNIDVDEDGNIVGLS.

Position 65–72 (65–72 (TPAGEGKT)) interacts with ATP.

It belongs to the formate--tetrahydrofolate ligase family.

It carries out the reaction (6S)-5,6,7,8-tetrahydrofolate + formate + ATP = (6R)-10-formyltetrahydrofolate + ADP + phosphate. The protein operates within one-carbon metabolism; tetrahydrofolate interconversion. The protein is Formate--tetrahydrofolate ligase of Thermosipho melanesiensis (strain DSM 12029 / CIP 104789 / BI429).